Here is a 176-residue protein sequence, read N- to C-terminus: Membrane glycoprotein UL144 (176 aa).

Residues 1-20 (MKPLVMLICFGVILLQLGVT) form the signal peptide. The stretch at 58–95 (PCPNGTYVSGLYNCTDCTQCNVTQVMIRNCTSTNNTVC) is one TNFR-Cys repeat. Disulfide bonds link C59-C71, C74-C87, and C77-C95. A helical transmembrane segment spans residues 134–154 (LAWLSLFIFLVGIILLILYLI).

As to quaternary structure, interacts with host TRIM23; this interaction causes auto-ubiquitination of TRAF6, leading to NF-kappaB activation.

It is found in the membrane. Its function is as follows. Activates NF-kappa-B in a tumor necrosis factor receptor (TNFR)-associated factor 6 (TRAF6)-dependent manner, causing the up-regulation of the chemokine CCL22. The polypeptide is Membrane glycoprotein UL144 (UL144) (Human cytomegalovirus (strain Merlin) (HHV-5)).